Here is a 134-residue protein sequence, read N- to C-terminus: MAKGHTKRSYSQRYAKWQAKFNAFSNPTVASTILSNVAPVAQQNFQTNVPTFTAVNENVSAVLSQYGITGPNRAIYQGFGLKIARALNRIGSGPALVNMINGLKSYYISAFNANPQVLDAVVNIITGSPTGYVS.

As to quaternary structure, homodimer.

The protein localises to the virion. Its function is as follows. Self-assembles to form a helical, filamentous nucleocapsid. The capsid proteins wrap around the DNA and maintain it in an A-form by non-specific desolvation and specific coordination of the DNA phosphate groups by positively charged residues. This certainly protects the viral DNA under conditions such as the extreme desiccation of its host. The protein is Putative capsid protein of Sulfolobus islandicus rod-shaped virus 1 (SIRV-1).